The following is a 394-amino-acid chain: Junctional adhesion molecule-like (394 aa).

The N-terminal stretch at 1–19 is a signal peptide; the sequence is MFCPLKLILLPVLLDYSLG. Ig-like V-type domains lie at 20–132 and 137–250; these read LNDL…KAVV and PEEP…IVLH. The Extracellular portion of the chain corresponds to 20–275; that stretch reads LNDLNVSPPE…RPLVLGGNQL (256 aa). Intrachain disulfides connect C42–C116 and C155–C234. N-linked (GlcNAc...) asparagine glycosylation is found at N76 and N231. The chain crosses the membrane as a helical span at residues 276–296; it reads VIIVGIVCATILLLPVLILIV. Residues 297–394 are Cytoplasmic-facing; sequence KKTCGNKSSV…GGMPKTQQAF (98 aa). A disordered region spans residues 369–394; that stretch reads PSLRSDRNNSLEKKSGGGMPKTQQAF. Residues 372–383 are compositionally biased toward basic and acidic residues; it reads RSDRNNSLEKKS.

Belongs to the immunoglobulin superfamily. In terms of assembly, homodimer; active form in leukocyte-endothelial cell adhesion. Interacts (homodimeric form) with CXADR. Interacts (via cytoplasmic domain) with the PI3 kinase; upon CXADR-binding. Interacts with ITGA4 and ITGB1; integrin alpha-4/beta-1 may regulate leukocyte to endothelial cells adhesion by controlling JAML homodimerization. As to expression, expression is restricted to the hematopoietic tissues with the exception of liver. Expressed in fetal liver, spleen and thymus. Preferentially expressed by mature leukocytes (at protein level).

Its subcellular location is the cell membrane. It is found in the cell junction. In terms of biological role, transmembrane protein of the plasma membrane of leukocytes that control their migration and activation through interaction with CXADR, a plasma membrane receptor found on adjacent epithelial and endothelial cells. The interaction between both receptors mediates the activation of gamma-delta T-cells, a subpopulation of T-cells residing in epithelia and involved in tissue homeostasis and repair. Upon epithelial CXADR-binding, JAML induces downstream cell signaling events in gamma-delta T-cells through PI3-kinase and MAP kinases. It results in proliferation and production of cytokines and growth factors by T-cells that in turn stimulate epithelial tissues repair. It also controls the transmigration of leukocytes within epithelial and endothelial tissues through adhesive interactions with epithelial and endothelial CXADR. This is Junctional adhesion molecule-like from Homo sapiens (Human).